The following is a 213-amino-acid chain: Holliday junction branch migration complex subunit RuvA (213 aa).

The tract at residues 1–64 (MIARLVGFLV…EDSITLFGFA (64 aa)) is domain I. The domain II stretch occupies residues 65 to 143 (SYLERDWFRL…AIALFSSAKG (79 aa)). Residues 144–159 (DHLAVEDISQPAASAH) are flexible linker. Residues 160–213 (HAGNFMADAVSALLNLGFKPAEAQRVVQLASEELGDQATLDSLVRLALRLSSKH) are domain III.

The protein belongs to the RuvA family. Homotetramer. Forms an RuvA(8)-RuvB(12)-Holliday junction (HJ) complex. HJ DNA is sandwiched between 2 RuvA tetramers; dsDNA enters through RuvA and exits via RuvB. An RuvB hexamer assembles on each DNA strand where it exits the tetramer. Each RuvB hexamer is contacted by two RuvA subunits (via domain III) on 2 adjacent RuvB subunits; this complex drives branch migration. In the full resolvosome a probable DNA-RuvA(4)-RuvB(12)-RuvC(2) complex forms which resolves the HJ.

Its subcellular location is the cytoplasm. In terms of biological role, the RuvA-RuvB-RuvC complex processes Holliday junction (HJ) DNA during genetic recombination and DNA repair, while the RuvA-RuvB complex plays an important role in the rescue of blocked DNA replication forks via replication fork reversal (RFR). RuvA specifically binds to HJ cruciform DNA, conferring on it an open structure. The RuvB hexamer acts as an ATP-dependent pump, pulling dsDNA into and through the RuvAB complex. HJ branch migration allows RuvC to scan DNA until it finds its consensus sequence, where it cleaves and resolves the cruciform DNA. This is Holliday junction branch migration complex subunit RuvA from Zymomonas mobilis subsp. mobilis (strain ATCC 31821 / ZM4 / CP4).